A 421-amino-acid polypeptide reads, in one-letter code: UDP-N-acetylglucosamine 1-carboxyvinyltransferase (421 aa).

Residue 22–23 (KN) coordinates phosphoenolpyruvate. Arginine 94 is a UDP-N-acetyl-alpha-D-glucosamine binding site. Catalysis depends on cysteine 118, which acts as the Proton donor. Residue cysteine 118 is modified to 2-(S-cysteinyl)pyruvic acid O-phosphothioketal. UDP-N-acetyl-alpha-D-glucosamine-binding positions include 163–166 (KVSV), aspartate 308, and isoleucine 330.

It belongs to the EPSP synthase family. MurA subfamily.

It is found in the cytoplasm. It carries out the reaction phosphoenolpyruvate + UDP-N-acetyl-alpha-D-glucosamine = UDP-N-acetyl-3-O-(1-carboxyvinyl)-alpha-D-glucosamine + phosphate. Its pathway is cell wall biogenesis; peptidoglycan biosynthesis. Functionally, cell wall formation. Adds enolpyruvyl to UDP-N-acetylglucosamine. The chain is UDP-N-acetylglucosamine 1-carboxyvinyltransferase from Orientia tsutsugamushi (strain Boryong) (Rickettsia tsutsugamushi).